The primary structure comprises 569 residues: Urease subunit alpha (569 aa).

In terms of domain architecture, Urease spans 131–569 (GSIDTHIHFI…VPMAQRYFLL (439 aa)). Ni(2+) contacts are provided by histidine 136, histidine 138, and lysine 219. N6-carboxylysine is present on lysine 219. Residue histidine 221 coordinates substrate. Positions 248 and 274 each coordinate Ni(2+). The Proton donor role is filled by histidine 322. Aspartate 362 is a Ni(2+) binding site.

This sequence belongs to the metallo-dependent hydrolases superfamily. Urease alpha subunit family. Heterotrimer of UreA (gamma), UreB (beta) and UreC (alpha) subunits. Three heterotrimers associate to form the active enzyme. The cofactor is Ni cation. Carboxylation allows a single lysine to coordinate two nickel ions.

The protein resides in the cytoplasm. It catalyses the reaction urea + 2 H2O + H(+) = hydrogencarbonate + 2 NH4(+). It functions in the pathway nitrogen metabolism; urea degradation; CO(2) and NH(3) from urea (urease route): step 1/1. The sequence is that of Urease subunit alpha from Prochlorococcus marinus (strain MIT 9215).